Here is a 357-residue protein sequence, read N- to C-terminus: Peptide chain release factor 1 (357 aa).

Q236 carries the post-translational modification N5-methylglutamine.

Belongs to the prokaryotic/mitochondrial release factor family. Methylated by PrmC. Methylation increases the termination efficiency of RF1.

It localises to the cytoplasm. Peptide chain release factor 1 directs the termination of translation in response to the peptide chain termination codons UAG and UAA. This chain is Peptide chain release factor 1, found in Mycobacterium sp. (strain JLS).